A 262-amino-acid chain; its full sequence is 5'-nucleotidase SurE (262 aa).

Residues aspartate 8, aspartate 9, serine 40, and asparagine 92 each coordinate a divalent metal cation.

Belongs to the SurE nucleotidase family. A divalent metal cation serves as cofactor.

Its subcellular location is the cytoplasm. It catalyses the reaction a ribonucleoside 5'-phosphate + H2O = a ribonucleoside + phosphate. In terms of biological role, nucleotidase that shows phosphatase activity on nucleoside 5'-monophosphates. This chain is 5'-nucleotidase SurE, found in Xylella fastidiosa (strain 9a5c).